The primary structure comprises 434 residues: Neuropeptide receptor 22 (434 aa).

Residues Met-1–Leu-55 are Extracellular-facing. A helical transmembrane segment spans residues Phe-56–Val-76. Over Tyr-77–Asn-86 the chain is Cytoplasmic. The chain crosses the membrane as a helical span at residues Ile-87–Ser-107. Residues Tyr-108 to Leu-128 are Extracellular-facing. Cys-126 and Cys-204 are oxidised to a cystine. The helical transmembrane segment at Leu-129 to Phe-149 threads the bilayer. Topologically, residues Asp-150–Arg-169 are cytoplasmic. The helical transmembrane segment at Ala-170–Phe-190 threads the bilayer. At Thr-191 to Val-226 the chain is on the extracellular side. Asn-207 carries N-linked (GlcNAc...) asparagine glycosylation. Residues Leu-227–Ile-247 traverse the membrane as a helical segment. The Cytoplasmic segment spans residues Lys-248–Val-277. A helical membrane pass occupies residues Pro-278–Ile-298. Topologically, residues Asn-299–Ser-310 are extracellular. The chain crosses the membrane as a helical span at residues Trp-311 to Val-331. Over Asn-332 to Ala-434 the chain is Cytoplasmic.

This sequence belongs to the G-protein coupled receptor 1 family. As to expression, expressed in many cells, mainly in the head region, with expression detected in the head muscles, I2 neurons, MC neurons, RIH neuron, AIA neurons, AUA neurons, ASK neurons, ASI neurons, a few B-type motorneurons in the posterior ventral nerve cord, pharyngeal muscles, body wall muscles, the intestine and a few classes of unidentified cells anterior to the nerve ring. Expression in the MC neurons is important to mediate suppression of feeding while expression in the RIH neuron is important for the facilitation of egg-laying. No expression detected in other tissues including hypodermis.

It is found in the cell membrane. Its function is as follows. Receptor for the LURY-1-1 and LURY-1-2 peptides which control food-related processes including feeding, lifespan, egg-laying and roaming behavior. Receptor for flp-7 which stimulates serotonin-induced fat loss. Serotonin induces secretion of flp-7 from neurons and binding to npr-22 which leads to induction of the atgp-1 lipase and subsequent fat loss. Acts in vitro as a receptor for the flp-7 FMRFamide-like neuropeptides TPMQRSSMVRF-amide, SPMQRSSMVRF-amide, SPMERSAMVRF-amide and SPMDRSKMVRF-amide. Also acts in vitro as a receptor for a number of other FMRFamide-like neuropeptides including the flp-1 neuropeptide PNFMRY-amide, the flp-9 neuropeptide KPSFVRF-amide, the flp-11 neuropeptides AMRNALVRF-amide, ASGGMRNALVRF-amide and NGAPQPFVRF-amide, the flp-13 neuropeptides AADGAPLIRF-amide, ASPSAPLIRF-amide, SPSAVPLIRF-amide, SAAAPLIRF-amide and ASSAPLIRF-amide, and the flp-22 neuropeptide SPSAKWMRF-amide. The SPMERSAMVRF-amide neuropeptide from flp-7 acts as the strongest in vitro activator of npr-22. This Caenorhabditis elegans protein is Neuropeptide receptor 22.